The chain runs to 86 residues: Putative regulatory protein BBR47_37350 (86 aa).

It belongs to the RemA family.

This chain is Putative regulatory protein BBR47_37350, found in Brevibacillus brevis (strain 47 / JCM 6285 / NBRC 100599).